Consider the following 491-residue polypeptide: Glutamyl-tRNA(Gln) amidotransferase subunit A (491 aa).

Active-site charge relay system residues include Lys79 and Ser154. Ser178 acts as the Acyl-ester intermediate in catalysis.

It belongs to the amidase family. GatA subfamily. In terms of assembly, heterotrimer of A, B and C subunits.

It catalyses the reaction L-glutamyl-tRNA(Gln) + L-glutamine + ATP + H2O = L-glutaminyl-tRNA(Gln) + L-glutamate + ADP + phosphate + H(+). Functionally, allows the formation of correctly charged Gln-tRNA(Gln) through the transamidation of misacylated Glu-tRNA(Gln) in organisms which lack glutaminyl-tRNA synthetase. The reaction takes place in the presence of glutamine and ATP through an activated gamma-phospho-Glu-tRNA(Gln). The sequence is that of Glutamyl-tRNA(Gln) amidotransferase subunit A from Synechococcus sp. (strain CC9605).